A 353-amino-acid polypeptide reads, in one-letter code: tRNA U34 carboxymethyltransferase (353 aa).

Carboxy-S-adenosyl-L-methionine-binding positions include Lys-101, Trp-119, Lys-124, Gly-144, 166–168, 207–208, Met-227, Tyr-231, and Arg-346; these read DPS and LE.

Belongs to the class I-like SAM-binding methyltransferase superfamily. CmoB family. As to quaternary structure, homotetramer.

It catalyses the reaction carboxy-S-adenosyl-L-methionine + 5-hydroxyuridine(34) in tRNA = 5-carboxymethoxyuridine(34) in tRNA + S-adenosyl-L-homocysteine + H(+). Its function is as follows. Catalyzes carboxymethyl transfer from carboxy-S-adenosyl-L-methionine (Cx-SAM) to 5-hydroxyuridine (ho5U) to form 5-carboxymethoxyuridine (cmo5U) at position 34 in tRNAs. The chain is tRNA U34 carboxymethyltransferase from Psychrobacter sp. (strain PRwf-1).